The following is a 158-amino-acid chain: Transcription elongation factor GreA (158 aa).

Residues 45 to 72 (AEYHAAREQQSFIEGRIKQLEGELSHAE) are a coiled coil.

Belongs to the GreA/GreB family.

Its function is as follows. Necessary for efficient RNA polymerase transcription elongation past template-encoded arresting sites. The arresting sites in DNA have the property of trapping a certain fraction of elongating RNA polymerases that pass through, resulting in locked ternary complexes. Cleavage of the nascent transcript by cleavage factors such as GreA or GreB allows the resumption of elongation from the new 3'terminus. GreA releases sequences of 2 to 3 nucleotides. The polypeptide is Transcription elongation factor GreA (Xylella fastidiosa (strain 9a5c)).